Consider the following 381-residue polypeptide: Chaperone protein DnaJ (381 aa).

Residues 5–70 (DFYEVLGVSR…QKKAAYDQYG (66 aa)) enclose the J domain. A CR-type zinc finger spans residues 136–214 (GVTKEIEVPT…CHGQGRKQKT (79 aa)). Zn(2+)-binding residues include Cys-149, Cys-152, Cys-166, Cys-169, Cys-188, Cys-191, Cys-202, and Cys-205. 4 CXXCXGXG motif repeats span residues 149–156 (CDSCDGSG), 166–173 (CGTCHGHG), 188–195 (CPTCHGKG), and 202–209 (CNECHGQG).

The protein belongs to the DnaJ family. Homodimer. The cofactor is Zn(2+).

It is found in the cytoplasm. Its function is as follows. Participates actively in the response to hyperosmotic and heat shock by preventing the aggregation of stress-denatured proteins and by disaggregating proteins, also in an autonomous, DnaK-independent fashion. Unfolded proteins bind initially to DnaJ; upon interaction with the DnaJ-bound protein, DnaK hydrolyzes its bound ATP, resulting in the formation of a stable complex. GrpE releases ADP from DnaK; ATP binding to DnaK triggers the release of the substrate protein, thus completing the reaction cycle. Several rounds of ATP-dependent interactions between DnaJ, DnaK and GrpE are required for fully efficient folding. Also involved, together with DnaK and GrpE, in the DNA replication of plasmids through activation of initiation proteins. The sequence is that of Chaperone protein DnaJ from Vibrio parahaemolyticus serotype O3:K6 (strain RIMD 2210633).